The chain runs to 96 residues: Putative septation protein SpoVG (96 aa).

It belongs to the SpoVG family.

Could be involved in septation. This is Putative septation protein SpoVG from Geobacillus sp. (strain WCH70).